The following is a 288-amino-acid chain: Probable aquaporin PIP2-2 (288 aa).

Residues 1-21 form a disordered region; it reads MAKDIEASAPEGGEFSAKDYT. 2 helical membrane passes run 42–62 and 81–101; these read AVIAEFIATLLFLYITVATVI and GVGILGIAWAFGGMIFILVYC. The NPA 1 signature appears at 111 to 113; that stretch reads NPA. The next 3 helical transmembrane spans lie at 130–150, 172–192, and 204–224; these read VLYIIAQCLGAICGVGLVKGF, GTGLGAEIIGTFVLVYTVFSA, and IPVLAPLPIGFAVFMVHLATI. Residues 232–234 carry the NPA 2 motif; it reads NPA. The helical transmembrane segment at 254–274 threads the bilayer; the sequence is IFWVGPLIGAAIAAAYHQYVL.

The protein belongs to the MIP/aquaporin (TC 1.A.8) family. PIP (TC 1.A.8.11) subfamily. As to expression, expressed in roots, leaves and anthers.

It localises to the cell membrane. In terms of biological role, aquaporins facilitate the transport of water and small neutral solutes across cell membranes. The sequence is that of Probable aquaporin PIP2-2 (PIP2-2) from Oryza sativa subsp. japonica (Rice).